The chain runs to 239 residues: Ribosomal RNA small subunit methyltransferase G (239 aa).

S-adenosyl-L-methionine-binding positions include Gly-78, Phe-83, 129–130 (AE), and Arg-148.

Belongs to the methyltransferase superfamily. RNA methyltransferase RsmG family.

The protein resides in the cytoplasm. Its function is as follows. Specifically methylates the N7 position of a guanine in 16S rRNA. The chain is Ribosomal RNA small subunit methyltransferase G from Clostridium botulinum (strain Loch Maree / Type A3).